The sequence spans 165 residues: V-type proton ATPase 16 kDa proteolipid subunit (165 aa).

The Lumenal portion of the chain corresponds to 1–10 (MPSTFSGDET). The chain crosses the membrane as a helical span at residues 11–33 (APFFGFLGAAAALVFSCMGAAYG). Residues 34–55 (TAKSGVGVASMGVMRPELVMKS) are Cytoplasmic-facing. Residues 56-76 (IVPVVMAGVLGIYGLIIAVII) form a helical membrane-spanning segment. Residues 77–95 (STGINPKTKSYYLFDGYAH) lie on the Lumenal side of the membrane. The helical transmembrane segment at 96–117 (LSSGLACGLAGLSAGMAIGIVG) threads the bilayer. The Cytoplasmic portion of the chain corresponds to 118–129 (DAGVRANAQQPK). Residues 130–155 (LFVGMILILIFAEALALYGLIVGIIL) form a helical membrane-spanning segment. Residues 156 to 165 (SSRAGQSRAE) lie on the Lumenal side of the membrane.

Belongs to the V-ATPase proteolipid subunit family. In terms of assembly, V-ATPase is a heteromultimeric enzyme composed of a peripheral catalytic V1 complex (main components: subunits A, B, C, D, E, and F) attached to an integral membrane V0 proton pore complex (main component: the proteolipid protein; which is present as a hexamer that forms the proton-conducting pore).

The protein localises to the vacuole membrane. In terms of biological role, proton-conducting pore forming subunit of the membrane integral V0 complex of vacuolar ATPase. V-ATPase is responsible for acidifying a variety of intracellular compartments in eukaryotic cells. The chain is V-type proton ATPase 16 kDa proteolipid subunit from Nicotiana tabacum (Common tobacco).